The primary structure comprises 185 residues: Probable chorismate pyruvate-lyase (185 aa).

3 residues coordinate substrate: arginine 80, leucine 118, and glutamate 170.

The protein belongs to the UbiC family.

The protein localises to the cytoplasm. The enzyme catalyses chorismate = 4-hydroxybenzoate + pyruvate. It participates in cofactor biosynthesis; ubiquinone biosynthesis. Removes the pyruvyl group from chorismate, with concomitant aromatization of the ring, to provide 4-hydroxybenzoate (4HB) for the ubiquinone pathway. In Pseudomonas putida (strain ATCC 47054 / DSM 6125 / CFBP 8728 / NCIMB 11950 / KT2440), this protein is Probable chorismate pyruvate-lyase.